Consider the following 770-residue polypeptide: Probable copper-exporting P-type ATPase V (770 aa).

The HMA domain maps to 1–66 (MRVCVTGFNV…AITKAQHVPA (66 aa)). Positions 103-130 (DKPLKASRCGGRPRGPVRGSASWPGEQN) are disordered. A compositionally biased stretch (low complexity) spans 110-121 (RCGGRPRGPVRG). 6 helical membrane passes run 141–161 (VWLA…FGAY), 164–184 (AGWL…WPIL), 193–213 (ALTS…FVYS), 217–237 (LFAG…FVVL), 377–397 (AVFV…WTLI), and 402–422 (VAGM…ALGL). The active-site 4-aspartylphosphate intermediate is the D460. The Mg(2+) site is built by D660 and D664. 2 helical membrane passes run 718–737 (LGWA…LGAL) and 741–760 (VAGA…SLRL).

It belongs to the cation transport ATPase (P-type) (TC 3.A.3) family. Type IB subfamily.

The protein localises to the cell membrane. It catalyses the reaction Cu(+)(in) + ATP + H2O = Cu(+)(out) + ADP + phosphate + H(+). Necessary for copper homeostasis and likely functions as a copper exporter. Also required for full virulence. The chain is Probable copper-exporting P-type ATPase V (ctpV) from Mycobacterium tuberculosis (strain CDC 1551 / Oshkosh).